The sequence spans 41 residues: Peroxidase 3 (41 aa).

This sequence belongs to the peroxidase family. Classical plant (class III) peroxidase subfamily. The cofactor is heme b. Ca(2+) is required as a cofactor.

The protein localises to the secreted. The enzyme catalyses 2 a phenolic donor + H2O2 = 2 a phenolic radical donor + 2 H2O. Its function is as follows. Removal of H(2)O(2), oxidation of toxic reductants, biosynthesis and degradation of lignin, suberization, auxin catabolism, response to environmental stresses such as wounding, pathogen attack and oxidative stress. These functions might be dependent on each isozyme/isoform in each plant tissue. This Vitis vinifera (Grape) protein is Peroxidase 3.